The sequence spans 72 residues: Probable protein E5B (72 aa).

The chain is Probable protein E5B from Homo sapiens (Human).